The following is a 214-amino-acid chain: ATP phosphoribosyltransferase (214 aa).

It belongs to the ATP phosphoribosyltransferase family. Short subfamily. As to quaternary structure, heteromultimer composed of HisG and HisZ subunits.

It is found in the cytoplasm. The catalysed reaction is 1-(5-phospho-beta-D-ribosyl)-ATP + diphosphate = 5-phospho-alpha-D-ribose 1-diphosphate + ATP. The protein operates within amino-acid biosynthesis; L-histidine biosynthesis; L-histidine from 5-phospho-alpha-D-ribose 1-diphosphate: step 1/9. Its function is as follows. Catalyzes the condensation of ATP and 5-phosphoribose 1-diphosphate to form N'-(5'-phosphoribosyl)-ATP (PR-ATP). Has a crucial role in the pathway because the rate of histidine biosynthesis seems to be controlled primarily by regulation of HisG enzymatic activity. The sequence is that of ATP phosphoribosyltransferase from Methylibium petroleiphilum (strain ATCC BAA-1232 / LMG 22953 / PM1).